Here is a 635-residue protein sequence, read N- to C-terminus: Threonine--tRNA ligase (635 aa).

Residues 1–61 (MINISFPDGS…DNDCKFRILT (61 aa)) form the TGS domain. Residues 242–533 (DHRKLGRELD…LIEEYAGRFP (292 aa)) are catalytic. 3 residues coordinate Zn(2+): C333, H384, and H510.

Belongs to the class-II aminoacyl-tRNA synthetase family. Homodimer. Requires Zn(2+) as cofactor.

It localises to the cytoplasm. The enzyme catalyses tRNA(Thr) + L-threonine + ATP = L-threonyl-tRNA(Thr) + AMP + diphosphate + H(+). In terms of biological role, catalyzes the attachment of threonine to tRNA(Thr) in a two-step reaction: L-threonine is first activated by ATP to form Thr-AMP and then transferred to the acceptor end of tRNA(Thr). Also edits incorrectly charged L-seryl-tRNA(Thr). In Rickettsia rickettsii (strain Sheila Smith), this protein is Threonine--tRNA ligase.